The chain runs to 563 residues: Ribulokinase (563 aa).

It belongs to the ribulokinase family.

The enzyme catalyses D-ribulose + ATP = D-ribulose 5-phosphate + ADP + H(+). It carries out the reaction L-ribulose + ATP = L-ribulose 5-phosphate + ADP + H(+). Its pathway is carbohydrate degradation; L-arabinose degradation via L-ribulose; D-xylulose 5-phosphate from L-arabinose (bacterial route): step 2/3. In Mycolicibacterium smegmatis (Mycobacterium smegmatis), this protein is Ribulokinase.